Reading from the N-terminus, the 61-residue chain is Large ribosomal subunit protein uL30 (61 aa).

Residues 1-20 (MSQKKVTVRQVGSPIGRKPE) form a disordered region.

This sequence belongs to the universal ribosomal protein uL30 family. As to quaternary structure, part of the 50S ribosomal subunit.

The chain is Large ribosomal subunit protein uL30 from Hyphomonas neptunium (strain ATCC 15444).